The chain runs to 419 residues: UDP-N-acetylglucosamine 1-carboxyvinyltransferase (419 aa).

Lys-22–Asn-23 serves as a coordination point for phosphoenolpyruvate. Arg-93 is a UDP-N-acetyl-alpha-D-glucosamine binding site. Catalysis depends on Cys-117, which acts as the Proton donor. The residue at position 117 (Cys-117) is a 2-(S-cysteinyl)pyruvic acid O-phosphothioketal. Residues Asp-307 and Ile-329 each coordinate UDP-N-acetyl-alpha-D-glucosamine.

Belongs to the EPSP synthase family. MurA subfamily.

The protein localises to the cytoplasm. It carries out the reaction phosphoenolpyruvate + UDP-N-acetyl-alpha-D-glucosamine = UDP-N-acetyl-3-O-(1-carboxyvinyl)-alpha-D-glucosamine + phosphate. Its pathway is cell wall biogenesis; peptidoglycan biosynthesis. Cell wall formation. Adds enolpyruvyl to UDP-N-acetylglucosamine. This chain is UDP-N-acetylglucosamine 1-carboxyvinyltransferase, found in Shewanella sediminis (strain HAW-EB3).